A 450-amino-acid polypeptide reads, in one-letter code: SAGA complex/transcription factor TFIID complex subunit Taf12 (450 aa).

Polar residues-rich tracts occupy residues 1 to 10 (MNGQHSSPGT), 19 to 29 (PVNQAQFSQQR), and 190 to 212 (QNRQASSANGNNTGTSTPVNAST). Disordered regions lie at residues 1-29 (MNGQHSSPGTPVQRPSAGPVNQAQFSQQR) and 190-281 (QNRQ…VEKS). A compositionally biased stretch (low complexity) spans 217–236 (STASTPQLQQTQAQANAPQQ). Polar residues-rich tracts occupy residues 237–246 (RINPETSSVP) and 255–281 (ANVSNESTELATSATQQSGLANNVEKS). Serine 297 is subject to Phosphoserine. The Histone-fold domain occupies 338–413 (NGNRLLSKRK…HLERNWNIRL (76 aa)). The interval 426–450 (RKTGPTPSYQQKQNAIGTAKSLNKD) is disordered. The segment covering 430–441 (PTPSYQQKQNAI) has biased composition (polar residues).

It belongs to the TAF12 family. Component of the 1.8 MDa SAGA (Spt-Ada-Gcn5 acetyltransferase) complex, which is composed of 19 subunits tra1, spt7, taf5, ngg1/ada3, sgf73, spt20, spt8, taf12, taf6, hfi1/ada1, ubp8, gcn5, ada2, spt3, sgf29, taf10, taf9, sgf11 and sus1. The SAGA complex is composed of 4 modules, namely the HAT (histone acetyltransferase) module (gcn5, ada2, ngg1/ada3 and sgf29), the DUB (deubiquitinating) module (ubp8, sgf11, sgf73 and sus1), the core or TAF (TBP-associated factor) module (taf5, taf6, taf9, taf10 and taf12), and the Tra1 or SPT (Suppressor of Ty) module (tra1, hfi1/ada1, spt3, spt7, spt8 and spt20). The Tra1/SPT module binds activators, the core module recruits TBP (TATA-binding protein), the HAT module contains the histone H3 acetyltransferase gcn5, and the DUB module comprises the histone H2B deubiquitinase ubp8. Component of the 1.2 MDa TFIID complex, which is composed of TATA-binding protein (TBP) and the 14 TBP-associated factors (TAFs). It comprises 1 copy of each taf1, taf2, taf3, taf7, taf8, taf11, taf13, 2 copies of each taf4, taf5, taf6, taf9, taf10, taf12, and 3 copies of taf14. In TFIID, taf12 heterodimerizes with taf4, forming ultimately an octamer consisting of a taf6-taf9 heterotetramer core flanked by taf4-taf12 dimers on either side, similar to the histone H2A-H2B-H3-H4 octamer.

The protein localises to the nucleus. In terms of biological role, functions as a component of both the DNA-binding general transcription initiation factor complex TFIID and the transcription coactivator SAGA complex. Binding of TFIID to a promoter (with or without TATA element) is the initial step in pre-initiation complex (PIC) formation. TFIID plays a key role in the regulation of gene expression by RNA polymerase II through different activities such as transcription activator interaction, core promoter recognition and selectivity, TFIIA and TFIIB interaction, chromatin modification (histone acetylation by TAF1), facilitation of DNA opening and initiation of transcription. SAGA acts as a general cofactor required for essentially all RNA polymerase II transcription. At the promoters, SAGA is required for transcription pre-initiation complex (PIC) recruitment. It influences RNA polymerase II transcriptional activity through different activities such as TBP interaction (via core/TAF module) and promoter selectivity, interaction with transcription activators (via Tra1/SPT module), and chromatin modification through histone acetylation (via HAT module) and deubiquitination (via DUB module). SAGA preferentially acetylates histones H3 (to form H3K9ac, H3K14ac, H3K18ac and H3K23ac) and H2B and deubiquitinates histone H2B. SAGA interacts with DNA via upstream activating sequences (UASs). The polypeptide is SAGA complex/transcription factor TFIID complex subunit Taf12 (Schizosaccharomyces pombe (strain 972 / ATCC 24843) (Fission yeast)).